The chain runs to 143 residues: UPF0201 protein Tneu_0685 (143 aa).

This sequence belongs to the UPF0201 family.

This is UPF0201 protein Tneu_0685 from Pyrobaculum neutrophilum (strain DSM 2338 / JCM 9278 / NBRC 100436 / V24Sta) (Thermoproteus neutrophilus).